A 234-amino-acid polypeptide reads, in one-letter code: Ribose-5-phosphate isomerase A (234 aa).

Substrate-binding positions include 39-42, 92-95, and 105-108; these read TGST, DGAD, and KGGG. The active-site Proton acceptor is the E114. K132 contributes to the substrate binding site.

The protein belongs to the ribose 5-phosphate isomerase family. In terms of assembly, homodimer.

It carries out the reaction aldehydo-D-ribose 5-phosphate = D-ribulose 5-phosphate. The protein operates within carbohydrate degradation; pentose phosphate pathway; D-ribose 5-phosphate from D-ribulose 5-phosphate (non-oxidative stage): step 1/1. Its function is as follows. Catalyzes the reversible conversion of ribose-5-phosphate to ribulose 5-phosphate. This Albidiferax ferrireducens (strain ATCC BAA-621 / DSM 15236 / T118) (Rhodoferax ferrireducens) protein is Ribose-5-phosphate isomerase A.